Consider the following 488-residue polypeptide: Putative sugar transporter ERD6-like 13 (488 aa).

The next 12 membrane-spanning stretches (helical) occupy residues 51-71 (LILL…GTAA), 89-109 (LAEF…GAAM), 116-138 (VFGR…LMIA), 151-171 (LFLG…IVEI), 182-202 (AINS…GSVI), 207-227 (LALI…FIPE), 291-311 (VGIG…TFYL), 324-344 (VGVM…IVIV), 353-373 (LTVA…SFLF), 390-410 (GVLV…WVMI), 423-445 (GTLC…NFLF), and 451-471 (GVFF…MKMV).

It belongs to the major facilitator superfamily. Sugar transporter (TC 2.A.1.1) family.

Its subcellular location is the membrane. Functionally, sugar transporter. This chain is Putative sugar transporter ERD6-like 13, found in Arabidopsis thaliana (Mouse-ear cress).